The following is a 239-amino-acid chain: Uridylate kinase (239 aa).

Residue 12-15 (KLSG) coordinates ATP. Positions 20–25 (GEKGFG) are involved in allosteric activation by GTP. Residue G54 coordinates UMP. ATP contacts are provided by G55 and R59. UMP-binding positions include D72 and 133 to 140 (TGNPFFST). Positions 166 and 169 each coordinate ATP.

It belongs to the UMP kinase family. In terms of assembly, homohexamer.

It is found in the cytoplasm. It carries out the reaction UMP + ATP = UDP + ADP. It participates in pyrimidine metabolism; CTP biosynthesis via de novo pathway; UDP from UMP (UMPK route): step 1/1. Allosterically activated by GTP. Inhibited by UTP. In terms of biological role, catalyzes the reversible phosphorylation of UMP to UDP. This Caldicellulosiruptor saccharolyticus (strain ATCC 43494 / DSM 8903 / Tp8T 6331) protein is Uridylate kinase.